The chain runs to 723 residues: Polyribonucleotide nucleotidyltransferase (723 aa).

Mg(2+) contacts are provided by Asp488 and Asp494. The region spanning Pro555–Ile614 is the KH domain. Residues Gly624–Lys692 form the S1 motif domain. The segment at Lys692 to Lys723 is disordered. Residues Ala693 to Lys723 are compositionally biased toward basic and acidic residues.

It belongs to the polyribonucleotide nucleotidyltransferase family. Mg(2+) is required as a cofactor.

Its subcellular location is the cytoplasm. The catalysed reaction is RNA(n+1) + phosphate = RNA(n) + a ribonucleoside 5'-diphosphate. Functionally, involved in mRNA degradation. Catalyzes the phosphorolysis of single-stranded polyribonucleotides processively in the 3'- to 5'-direction. The polypeptide is Polyribonucleotide nucleotidyltransferase (Listeria innocua serovar 6a (strain ATCC BAA-680 / CLIP 11262)).